The following is a 136-amino-acid chain: Histone H3 (136 aa).

Residues 1–42 form a disordered region; the sequence is MARTKQTARKSTGGKAPRKQIAAKAARKAAPSTGGVKKPHRY. K5 bears the N6,N6,N6-trimethyllysine; alternate mark. K5 bears the N6,N6-dimethyllysine; alternate mark. K5 and K10 each carry N6-methyllysine; alternate. K10 carries the post-translational modification N6-acetyllysine; alternate. A Phosphoserine modification is found at S11. N6,N6-dimethyllysine; alternate is present on K15. 5 positions are modified to N6-acetyllysine; alternate: K15, K19, K24, K28, and K37. 4 positions are modified to N6-methyllysine; alternate: K19, K24, K28, and K37. A compositionally biased stretch (low complexity) spans 19 to 31; that stretch reads KQIAAKAARKAAP. N6,N6,N6-trimethyllysine; alternate is present on residues K28 and K37. N6,N6-dimethyllysine; alternate is present on residues K28 and K37. N6-acetyllysine occurs at positions 57 and 65. N6,N6,N6-trimethyllysine; alternate is present on K80. K80 carries the post-translational modification N6,N6-dimethyllysine; alternate. At K80 the chain carries N6-methyllysine; alternate.

The protein belongs to the histone H3 family. The nucleosome is a histone octamer containing two molecules each of H2A, H2B, H3 and H4 assembled in one H3-H4 heterotetramer and two H2A-H2B heterodimers. The octamer wraps approximately 147 bp of DNA. Phosphorylated to form H3S10ph. H3S10ph promotes subsequent H3K14ac formation and is required for transcriptional activation through TBP recruitment to the promoters. Post-translationally, mono-, di- and trimethylated by the COMPASS complex to form H3K4me1/2/3. H3K4me activates gene expression by regulating transcription elongation and plays a role in telomere length maintenance. H3K4me enrichment correlates with transcription levels, and occurs in a 5' to 3' gradient with H3K4me3 enrichment at the 5'-end of genes, shifting to H3K4me2 and then H3K4me1. Methylated by SET2 to form H3K36me. H3K36me represses gene expression. Methylated by DOT1 to form H3K79me. H3K79me is required for association of SIR proteins with telomeric regions and for telomeric silencing. The COMPASS-mediated formation of H3K4me2/3 and the DOT1-mediated formation of H3K79me require H2BK123ub1. In terms of processing, acetylation of histone H3 leads to transcriptional activation. H3K14ac formation by GCN5 is promoted by H3S10ph. H3K14ac can also be formed by ESA1. H3K56ac formation occurs predominantly in newly synthesized H3 molecules during G1, S and G2/M of the cell cycle and may be involved in DNA repair.

It localises to the nucleus. It is found in the chromosome. Core component of nucleosome. Nucleosomes wrap and compact DNA into chromatin, limiting DNA accessibility to the cellular machineries which require DNA as a template. Histones thereby play a central role in transcription regulation, DNA repair, DNA replication and chromosomal stability. DNA accessibility is regulated via a complex set of post-translational modifications of histones, also called histone code, and nucleosome remodeling. This chain is Histone H3 (HHT1), found in Coccidioides immitis (strain RS) (Valley fever fungus).